The primary structure comprises 91 residues: Bacterial microcompartment shell vertex protein PduN (91 aa).

In terms of domain architecture, BMV spans 1 to 87 (MHLARVTGAV…IDLAVVGIVD (87 aa)).

The protein belongs to the CcmL/EutN family. In terms of assembly, homopentamer. Interacts with shell protein PduA.

The protein localises to the bacterial microcompartment. The protein operates within polyol metabolism; 1,2-propanediol degradation. Probably forms vertices in the shell of the bacterial microcompartment (BMC) dedicated to 1,2-propanediol (1,2-PD) degradation. Required for structural integrity of BMCs and to mitigate propionaldehyde toxicity. Functionally, the 1,2-PD-specific bacterial microcompartment (BMC) concentrates low levels of 1,2-PD catabolic enzymes, concentrates volatile reaction intermediates thus enhancing pathway flux and keeps the level of toxic, mutagenic propionaldehyde low. The sequence is that of Bacterial microcompartment shell vertex protein PduN from Salmonella typhimurium (strain LT2 / SGSC1412 / ATCC 700720).